The following is a 222-amino-acid chain: Probable nicotinate-nucleotide adenylyltransferase (222 aa).

Belongs to the NadD family.

It catalyses the reaction nicotinate beta-D-ribonucleotide + ATP + H(+) = deamido-NAD(+) + diphosphate. It participates in cofactor biosynthesis; NAD(+) biosynthesis; deamido-NAD(+) from nicotinate D-ribonucleotide: step 1/1. Functionally, catalyzes the reversible adenylation of nicotinate mononucleotide (NaMN) to nicotinic acid adenine dinucleotide (NaAD). The chain is Probable nicotinate-nucleotide adenylyltransferase from Xylella fastidiosa (strain M23).